A 1076-amino-acid polypeptide reads, in one-letter code: Vacuolar membrane protease (1076 aa).

At 1–11 the chain is on the cytoplasmic side; sequence MKCYNPSAFVP. The helical transmembrane segment at 12–32 threads the bilayer; sequence MAVTLVTVVIYLGVFIPLLII. The Vacuolar segment spans residues 33–437; it reads HETVPSAPDD…TVFAVFRLRT (405 aa). N50, N99, and N156 each carry an N-linked (GlcNAc...) asparagine glycan. Residues H220 and D232 each contribute to the Zn(2+) site. E266 serves as the catalytic Proton acceptor. 3 residues coordinate Zn(2+): E267, E292, and H364. The helical transmembrane segment at 438 to 458 threads the bilayer; sequence LFAWSLTLLIASPLILFAVSY. Over 459–491 the chain is Cytoplasmic; sequence LLNRQEKFYFFAGSIKSKNPEDEPISLGGWRGA. The chain crosses the membrane as a helical span at residues 492-512; it reads FRFPITLFITSAITFACASLI. Residues 513–525 are Vacuolar-facing; sequence NKINPMIIYSSPY. A helical membrane pass occupies residues 526 to 546; that stretch reads AVWSMSATLFFSVFWFIMAGC. At 547–556 the chain is on the cytoplasmic side; sequence NFVRPSALQR. Residues 557 to 577 form a helical membrane-spanning segment; the sequence is GYAFMWMFVFGWILLVVATVY. Residues 578–584 are Vacuolar-facing; the sequence is EDRFKIS. Residues 585 to 605 form a helical membrane-spanning segment; that stretch reads GGYLFVFYEAAIFLATLIAIC. Residues 606 to 738 lie on the Cytoplasmic side of the membrane; sequence EQFALPRKST…LPIWTWLVQY (133 aa). 2 disordered regions span residues 619 to 662 and 701 to 720; these read DSQN…EETV and SYDGPADHDDKKGHKKHPYG. The segment covering 621–632 has biased composition (basic and acidic residues); that stretch reads QNDHSDNQDHHH. A compositionally biased stretch (acidic residues) spans 647 to 660; it reads PNADDEAAEEDQEE. Residues 739-759 traverse the membrane as a helical segment; the sequence is LLVGPFILVILGQVGLFLVAA. Topologically, residues 760–771 are vacuolar; sequence LHQTGTDGSPLF. A helical transmembrane segment spans residues 772 to 792; sequence LPYLIVAIFSILLLLPVTPFI. Residues 793 to 799 lie on the Cytoplasmic side of the membrane; the sequence is HRLTHHM. The chain crosses the membrane as a helical span at residues 800-820; it reads PTFFFLVFIGTLIYNLVAFPF. The Vacuolar portion of the chain corresponds to 821–1076; it reads SPNNRYKAYF…LGLAFLLAYV (256 aa). N-linked (GlcNAc...) asparagine glycosylation is present at N912.

This sequence belongs to the peptidase M28 family. The cofactor is Zn(2+).

It localises to the vacuole membrane. May be involved in vacuolar sorting and osmoregulation. This is Vacuolar membrane protease from Sclerotinia sclerotiorum (strain ATCC 18683 / 1980 / Ss-1) (White mold).